Here is a 465-residue protein sequence, read N- to C-terminus: 23S rRNA (uracil(1939)-C(5))-methyltransferase RlmD (465 aa).

The disordered stretch occupies residues 1–22; that stretch reads MSEAVPTSARKSKNAPVAPGPA. The 65-residue stretch at 16-80 folds into the TRAM domain; sequence PVAPGPAPVL…PSYEQATVVD (65 aa). Cys-93, Cys-99, Cys-102, and Cys-181 together coordinate [4Fe-4S] cluster. Positions 289, 318, 323, 339, 367, and 388 each coordinate S-adenosyl-L-methionine. The active-site Nucleophile is Cys-421.

The protein belongs to the class I-like SAM-binding methyltransferase superfamily. RNA M5U methyltransferase family. RlmD subfamily.

It catalyses the reaction uridine(1939) in 23S rRNA + S-adenosyl-L-methionine = 5-methyluridine(1939) in 23S rRNA + S-adenosyl-L-homocysteine + H(+). Functionally, catalyzes the formation of 5-methyl-uridine at position 1939 (m5U1939) in 23S rRNA. The protein is 23S rRNA (uracil(1939)-C(5))-methyltransferase RlmD of Burkholderia ambifaria (strain ATCC BAA-244 / DSM 16087 / CCUG 44356 / LMG 19182 / AMMD) (Burkholderia cepacia (strain AMMD)).